We begin with the raw amino-acid sequence, 38 residues long: Potassium channel toxin alpha-KTx 3.7 (38 aa).

Intrachain disulfides connect cysteine 8–cysteine 28, cysteine 14–cysteine 33, and cysteine 18–cysteine 35.

It belongs to the short scorpion toxin superfamily. Potassium channel inhibitor family. Alpha-KTx 03 subfamily. Expressed by the venom gland.

The protein localises to the secreted. In terms of biological role, blocks voltage-gated potassium channels Kv1.1/KCNA1 (IC(50)=0.6 nM), Kv1.2/KCNA2 (IC(50)=5.4 nM), Kv1.3/KCNA3 (IC(50)=0.014 nM) potently, and moderately block intermediate conductance calcium-activated potassium channels KCa3.1/KCNN4 (IC(50)=225 nM). Also shows activity on muscle-type nicotinic acetylcholine receptor (nAChR), since it reversibly and dose-dependently inhibits acetylcholine-induced current through mouse muscle-type nAChR heterologously expressed in Xenopus oocytes (IC(50)=1.6 uM). The sequence is that of Potassium channel toxin alpha-KTx 3.7 from Orthochirus scrobiculosus (Central Asian scorpion).